Reading from the N-terminus, the 466-residue chain is MRVFNTLTRQKEEFIPIITGEVKMYVCGPTVYNFFHIGNGRTFIVFDTIRRYLEYRGYKVRFVQNFTDIDDKMINKANDEGITVKELGDKYIKEYYQDADSLKIERATVNPRATEYIHDIIKFVEELIEAGFAYEVDGDVYYSTKKFDNYGRLVGQNLDDLQVGARISVDERKKDPMDFAVWKAQKPGEPAWESPWGPGRPGWHIECSCMAKKLLGDTIDIHAGGMDLRFPHHENEIAQSEALTGKTFANYWLHAAFVNVDNKKMSKSLNNFFTAREVLEEYSSDAIRFLMLSGHYRIQINFTKELLDSAKSSIERLYNCINNLENLKDEVTKKLMDEAEEKYLKSLDKYREKFIEKMDDDFNTADAISVLFDLTKDINNNVNINSSSELCEKAESMVRELGNPLGILQDRIEKDLETEIQELIEKRQQARKNKDFALADKIRDDLKSRNIILEDTPQGVRWKKID.

Cys-27 provides a ligand contact to Zn(2+). A 'HIGH' region motif is present at residues Pro-29–Asn-39. Positions 207, 232, and 236 each coordinate Zn(2+). A 'KMSKS' region motif is present at residues Lys-264–Ser-268. An ATP-binding site is contributed by Lys-267.

Belongs to the class-I aminoacyl-tRNA synthetase family. In terms of assembly, monomer. The cofactor is Zn(2+).

It localises to the cytoplasm. The catalysed reaction is tRNA(Cys) + L-cysteine + ATP = L-cysteinyl-tRNA(Cys) + AMP + diphosphate. The sequence is that of Cysteine--tRNA ligase from Clostridium beijerinckii (strain ATCC 51743 / NCIMB 8052) (Clostridium acetobutylicum).